We begin with the raw amino-acid sequence, 215 residues long: Adenylate kinase (215 aa).

An ATP-binding site is contributed by 10-15; the sequence is GAGKGT. Positions 30–59 are NMP; the sequence is STGDMLRAAVKAGSPLGLKVKGVMDSGGLV. AMP is bound by residues Thr31, Arg36, 57 to 59, 85 to 88, and Gln92; these read GLV and GFPR. The LID stretch occupies residues 122-159; that stretch reads GRRVHAASGRVYHDLHNPPKVAGKDDETGEDLIQREDD. Residues Arg123 and 132-133 contribute to the ATP site; that span reads VY. AMP is bound by residues Arg156 and Arg167. Residue Gly201 participates in ATP binding.

It belongs to the adenylate kinase family. Monomer.

It localises to the cytoplasm. It catalyses the reaction AMP + ATP = 2 ADP. It participates in purine metabolism; AMP biosynthesis via salvage pathway; AMP from ADP: step 1/1. In terms of biological role, catalyzes the reversible transfer of the terminal phosphate group between ATP and AMP. Plays an important role in cellular energy homeostasis and in adenine nucleotide metabolism. The protein is Adenylate kinase of Azotobacter vinelandii (strain DJ / ATCC BAA-1303).